A 176-amino-acid polypeptide reads, in one-letter code: Large ribosomal subunit protein uL6 (176 aa).

The span at 151–170 (RPPEPYKGKGVRYADEQVRR) shows a compositional bias: basic and acidic residues. The interval 151 to 176 (RPPEPYKGKGVRYADEQVRRKEAKKK) is disordered.

The protein belongs to the universal ribosomal protein uL6 family. As to quaternary structure, part of the 50S ribosomal subunit.

Functionally, this protein binds to the 23S rRNA, and is important in its secondary structure. It is located near the subunit interface in the base of the L7/L12 stalk, and near the tRNA binding site of the peptidyltransferase center. This is Large ribosomal subunit protein uL6 from Shewanella pealeana (strain ATCC 700345 / ANG-SQ1).